The primary structure comprises 432 residues: Adenylosuccinate synthetase (432 aa).

GTP-binding positions include 13 to 19 and 41 to 43; these read GDEGKGK and GHT. The Proton acceptor role is filled by D14. 2 residues coordinate Mg(2+): D14 and G41. IMP contacts are provided by residues 14–17, 39–42, T130, R144, Q225, T240, and R304; these read DEGK and NAGH. The Proton donor role is filled by H42. Residue 300–306 participates in substrate binding; it reads ATTGRSR. GTP-binding positions include R306, 332–334, and 415–417; these read KLD and STG.

This sequence belongs to the adenylosuccinate synthetase family. As to quaternary structure, homodimer. Mg(2+) serves as cofactor.

The protein localises to the cytoplasm. It catalyses the reaction IMP + L-aspartate + GTP = N(6)-(1,2-dicarboxyethyl)-AMP + GDP + phosphate + 2 H(+). It participates in purine metabolism; AMP biosynthesis via de novo pathway; AMP from IMP: step 1/2. Functionally, plays an important role in the de novo pathway of purine nucleotide biosynthesis. Catalyzes the first committed step in the biosynthesis of AMP from IMP. In Marinomonas sp. (strain MWYL1), this protein is Adenylosuccinate synthetase.